A 195-amino-acid chain; its full sequence is Dual-action ribosomal maturation protein DarP (195 aa).

This sequence belongs to the DarP family.

The protein resides in the cytoplasm. Member of a network of 50S ribosomal subunit biogenesis factors which assembles along the 30S-50S interface, preventing incorrect 23S rRNA structures from forming. Promotes peptidyl transferase center (PTC) maturation. This is Dual-action ribosomal maturation protein DarP from Stenotrophomonas maltophilia (strain K279a).